A 171-amino-acid polypeptide reads, in one-letter code: Adenine phosphoribosyltransferase (171 aa).

Belongs to the purine/pyrimidine phosphoribosyltransferase family. Homodimer.

The protein localises to the cytoplasm. The catalysed reaction is AMP + diphosphate = 5-phospho-alpha-D-ribose 1-diphosphate + adenine. It functions in the pathway purine metabolism; AMP biosynthesis via salvage pathway; AMP from adenine: step 1/1. In terms of biological role, catalyzes a salvage reaction resulting in the formation of AMP, that is energically less costly than de novo synthesis. This Citrifermentans bemidjiense (strain ATCC BAA-1014 / DSM 16622 / JCM 12645 / Bem) (Geobacter bemidjiensis) protein is Adenine phosphoribosyltransferase.